Here is a 95-residue protein sequence, read N- to C-terminus: Putative membrane protein insertion efficiency factor (95 aa).

This sequence belongs to the UPF0161 family.

It is found in the cell membrane. Functionally, could be involved in insertion of integral membrane proteins into the membrane. The polypeptide is Putative membrane protein insertion efficiency factor (Lactobacillus delbrueckii subsp. bulgaricus (strain ATCC 11842 / DSM 20081 / BCRC 10696 / JCM 1002 / NBRC 13953 / NCIMB 11778 / NCTC 12712 / WDCM 00102 / Lb 14)).